Consider the following 497-residue polypeptide: Glycerol kinase (497 aa).

T12 is an ADP binding site. T12, T13, and S14 together coordinate ATP. Residue T12 participates in sn-glycerol 3-phosphate binding. Residue R16 participates in ADP binding. Sn-glycerol 3-phosphate is bound by residues R82, E83, Y134, and D243. Positions 82, 83, 134, 243, and 244 each coordinate glycerol. ADP contacts are provided by T265 and G308. 4 residues coordinate ATP: T265, G308, Q312, and G409. ADP-binding residues include G409 and N413.

This sequence belongs to the FGGY kinase family. In terms of assembly, homotetramer and homodimer (in equilibrium).

It catalyses the reaction glycerol + ATP = sn-glycerol 3-phosphate + ADP + H(+). Its pathway is polyol metabolism; glycerol degradation via glycerol kinase pathway; sn-glycerol 3-phosphate from glycerol: step 1/1. Activated by phosphorylation and inhibited by fructose 1,6-bisphosphate (FBP). Key enzyme in the regulation of glycerol uptake and metabolism. Catalyzes the phosphorylation of glycerol to yield sn-glycerol 3-phosphate. The sequence is that of Glycerol kinase from Caldanaerobacter subterraneus subsp. tengcongensis (strain DSM 15242 / JCM 11007 / NBRC 100824 / MB4) (Thermoanaerobacter tengcongensis).